The chain runs to 149 residues: Large ribosomal subunit protein uL13 (149 aa).

Belongs to the universal ribosomal protein uL13 family. In terms of assembly, part of the 50S ribosomal subunit.

This protein is one of the early assembly proteins of the 50S ribosomal subunit, although it is not seen to bind rRNA by itself. It is important during the early stages of 50S assembly. This chain is Large ribosomal subunit protein uL13, found in Gemmatimonas aurantiaca (strain DSM 14586 / JCM 11422 / NBRC 100505 / T-27).